Here is a 117-residue protein sequence, read N- to C-terminus: MRNNKTPFLSAIFTASIRGYQRFFSAFTPSSCRFYPTCSNYALWLLCFESPLSAMGKIAIRILSCNPFCSGGIAYPTTRLKRPSLIQSHKDSNRNFKTITFWLVPTKSHATYYIIKV.

Belongs to the UPF0161 family.

It is found in the cell inner membrane. Could be involved in insertion of integral membrane proteins into the membrane. This Helicobacter pylori (strain ATCC 700392 / 26695) (Campylobacter pylori) protein is Putative membrane protein insertion efficiency factor.